We begin with the raw amino-acid sequence, 555 residues long: Potassium-transporting ATPase potassium-binding subunit (555 aa).

10 consecutive transmembrane segments (helical) span residues 2–22, 60–80, 130–150, 173–193, 246–266, 278–298, 374–394, 412–432, 483–503, and 525–545; these read IWVA…PTGI, QYAL…YFIF, IGIT…VMAF, VFLP…VPQT, MSNI…PFTY, ILFV…TTSE, AGFV…GLMV, LIAV…ALAL, LVMF…AASL, and GIFI…MLVL.

It belongs to the KdpA family. The system is composed of three essential subunits: KdpA, KdpB and KdpC.

It is found in the cell membrane. Part of the high-affinity ATP-driven potassium transport (or Kdp) system, which catalyzes the hydrolysis of ATP coupled with the electrogenic transport of potassium into the cytoplasm. This subunit binds the extracellular potassium ions and delivers the ions to the membrane domain of KdpB through an intramembrane tunnel. This is Potassium-transporting ATPase potassium-binding subunit from Bacillus anthracis (strain A0248).